The primary structure comprises 382 residues: Galactokinase (382 aa).

E34 to D37 is a substrate binding site. G124–S130 lines the ATP pocket. Mg(2+) is bound by residues S130 and E162. D174 functions as the Proton acceptor in the catalytic mechanism. Substrate is bound at residue Y223.

This sequence belongs to the GHMP kinase family. GalK subfamily.

It is found in the cytoplasm. The enzyme catalyses alpha-D-galactose + ATP = alpha-D-galactose 1-phosphate + ADP + H(+). The protein operates within carbohydrate metabolism; galactose metabolism. Functionally, catalyzes the transfer of the gamma-phosphate of ATP to D-galactose to form alpha-D-galactose-1-phosphate (Gal-1-P). The polypeptide is Galactokinase (Cronobacter sakazakii (strain ATCC BAA-894) (Enterobacter sakazakii)).